Consider the following 367-residue polypeptide: Porin Omp2a (367 aa).

Residues 1 to 22 (MNIKSLLLGSAAALVAASGAQA) form the signal peptide.

This sequence belongs to the alphaproteobacteria porin family. In terms of assembly, monomer.

The protein localises to the cell outer membrane. Its function is as follows. Forms passive diffusion pores that allow small molecular weight hydrophilic materials across the outer membrane. The sequence is that of Porin Omp2a (omp2a) from Brucella canis (strain ATCC 23365 / NCTC 10854 / RM-666).